The sequence spans 65 residues: Large ribosomal subunit protein bL35 (65 aa).

A disordered region spans residues 30–65 (AFRSHLAQNKSTKQKRQSKHGTFMHPTDYKRLKDLM). Positions 56–65 (TDYKRLKDLM) are enriched in basic and acidic residues.

Belongs to the bacterial ribosomal protein bL35 family.

This is Large ribosomal subunit protein bL35 from Mycoplasma mobile (strain ATCC 43663 / 163K / NCTC 11711) (Mesomycoplasma mobile).